Reading from the N-terminus, the 263-residue chain is Phosphatidylglycerol--prolipoprotein diacylglyceryl transferase (263 aa).

The next 4 helical transmembrane spans lie at 10-30, 56-76, 91-111, and 117-137; these read VAITLGPLQFRWYGLMYLFGF, MVTYVILGVVLGGRIGYILFY, IWNGGMSFHGGLLGVVFAMWL, and GLGFMDVSDFVAPLIPPGLFF. Position 139 (Arg139) interacts with a 1,2-diacyl-sn-glycero-3-phospho-(1'-sn-glycerol). The next 3 membrane-spanning stretches (helical) occupy residues 171–191, 199–219, and 231–251; these read PSQLYECALEGVILFLALWVF, GHVSGLFALLYGVFRFTVEFV, and FGWLTMGQVLCLPLIMLGLWL.

It belongs to the Lgt family.

It localises to the cell inner membrane. It catalyses the reaction L-cysteinyl-[prolipoprotein] + a 1,2-diacyl-sn-glycero-3-phospho-(1'-sn-glycerol) = an S-1,2-diacyl-sn-glyceryl-L-cysteinyl-[prolipoprotein] + sn-glycerol 1-phosphate + H(+). Its pathway is protein modification; lipoprotein biosynthesis (diacylglyceryl transfer). In terms of biological role, catalyzes the transfer of the diacylglyceryl group from phosphatidylglycerol to the sulfhydryl group of the N-terminal cysteine of a prolipoprotein, the first step in the formation of mature lipoproteins. This chain is Phosphatidylglycerol--prolipoprotein diacylglyceryl transferase, found in Nitratidesulfovibrio vulgaris (strain DP4) (Desulfovibrio vulgaris).